A 500-amino-acid chain; its full sequence is Guanosine-5'-triphosphate,3'-diphosphate pyrophosphatase (500 aa).

It belongs to the GppA/Ppx family. GppA subfamily.

It carries out the reaction guanosine 3'-diphosphate 5'-triphosphate + H2O = guanosine 3',5'-bis(diphosphate) + phosphate + H(+). Its pathway is purine metabolism; ppGpp biosynthesis; ppGpp from GTP: step 2/2. In terms of biological role, catalyzes the conversion of pppGpp to ppGpp. Guanosine pentaphosphate (pppGpp) is a cytoplasmic signaling molecule which together with ppGpp controls the 'stringent response', an adaptive process that allows bacteria to respond to amino acid starvation, resulting in the coordinated regulation of numerous cellular activities. The sequence is that of Guanosine-5'-triphosphate,3'-diphosphate pyrophosphatase from Photorhabdus laumondii subsp. laumondii (strain DSM 15139 / CIP 105565 / TT01) (Photorhabdus luminescens subsp. laumondii).